The primary structure comprises 476 residues: MNFETVIGLEVHVELKTNSKIFSSAPAHFGAEPNTNTTVVDLGMPGVLPVLNKRAVEYGMKAAMAINCEIAEHTKFDRKNYFYPDNPKAYQISQFDKPIGEHGWIEIEVGGKKKKIGITRLHLEEDAGKNTHTSHGYSLVDINRQGTPLIEIVSEPDIRSAEEAYAYLEKLKSIIQYTGVSDVKMEEGSMRCDANISIRPIGQEEFGVKTELKNLNSFNNVRKGIEYEEKRQAEVLKSGGIIEQETRRFEEATGKTSLMRIKEGSDDYRYFPEPDLVDLFIDDAWKERIRAEIPELPDKRQIRYINDLGLPAYDAMVLTLTKEMSDFFEATLAAGADAKQASNWLMGEVSAYLNAEQKELHDTGLTPENLAGMIKLIEAGTISSKIAKKVFRELAQNGGDAEQVVKDKGLVQISDEGALRTIIGEILDNNEQSIIDYKNGKDRAVGFLVGQVMKATKGQANPPMVNKILLEEMNKR.

This sequence belongs to the GatB/GatE family. GatB subfamily. As to quaternary structure, heterotrimer of A, B and C subunits.

The catalysed reaction is L-glutamyl-tRNA(Gln) + L-glutamine + ATP + H2O = L-glutaminyl-tRNA(Gln) + L-glutamate + ADP + phosphate + H(+). It carries out the reaction L-aspartyl-tRNA(Asn) + L-glutamine + ATP + H2O = L-asparaginyl-tRNA(Asn) + L-glutamate + ADP + phosphate + 2 H(+). Its function is as follows. Allows the formation of correctly charged Asn-tRNA(Asn) or Gln-tRNA(Gln) through the transamidation of misacylated Asp-tRNA(Asn) or Glu-tRNA(Gln) in organisms which lack either or both of asparaginyl-tRNA or glutaminyl-tRNA synthetases. The reaction takes place in the presence of glutamine and ATP through an activated phospho-Asp-tRNA(Asn) or phospho-Glu-tRNA(Gln). The sequence is that of Aspartyl/glutamyl-tRNA(Asn/Gln) amidotransferase subunit B from Listeria innocua serovar 6a (strain ATCC BAA-680 / CLIP 11262).